Here is a 390-residue protein sequence, read N- to C-terminus: Endonuclease 8-like 1 (390 aa).

Pro2 serves as the catalytic Schiff-base intermediate with DNA. Glu3 (proton donor) is an active-site residue. Lys54 serves as the catalytic Proton donor; for beta-elimination activity. Residue Asn176 coordinates DNA. Positions Thr278–Ser390 are disordered. Residues Lys291–Lys301 show a composition bias toward basic residues. The segment covering Thr335 to Gln347 has biased composition (polar residues). Arg339 lines the DNA pocket. The active-site Proton donor; for delta-elimination activity is the Arg339.

Belongs to the FPG family. Ubiquitous.

It localises to the cytoplasm. The protein localises to the cytoskeleton. Its subcellular location is the microtubule organizing center. It is found in the centrosome. The protein resides in the nucleus. It localises to the chromosome. The catalysed reaction is 2'-deoxyribonucleotide-(2'-deoxyribose 5'-phosphate)-2'-deoxyribonucleotide-DNA = a 3'-end 2'-deoxyribonucleotide-(2,3-dehydro-2,3-deoxyribose 5'-phosphate)-DNA + a 5'-end 5'-phospho-2'-deoxyribonucleoside-DNA + H(+). Functionally, involved in base excision repair of DNA damaged by oxidation or by mutagenic agents. Acts as a DNA glycosylase that recognizes and removes damaged bases. Has a preference for oxidized pyrimidines, such as thymine glycol, formamidopyrimidine (Fapy) and 5-hydroxyuracil. Has marginal activity towards 8-oxoguanine. Has AP (apurinic/apyrimidinic) lyase activity and introduces nicks in the DNA strand. Cleaves the DNA backbone by beta-delta elimination to generate a single-strand break at the site of the removed base with both 3'- and 5'-phosphates. Has DNA glycosylase/lyase activity towards mismatched uracil and thymine, in particular in U:C and T:C mismatches. Specifically binds 5-hydroxymethylcytosine (5hmC), suggesting that it acts as a specific reader of 5hmC. This is Endonuclease 8-like 1 (NEIL1) from Homo sapiens (Human).